We begin with the raw amino-acid sequence, 197 residues long: dITP/XTP pyrophosphatase (197 aa).

Position 8–13 (8–13 (TGNAGK)) interacts with substrate. 2 residues coordinate Mg(2+): Glu40 and Asp69. Catalysis depends on Asp69, which acts as the Proton acceptor. Substrate is bound by residues Ser70, 154 to 157 (FGYD), Lys177, and 182 to 183 (HR).

The protein belongs to the HAM1 NTPase family. Homodimer. Requires Mg(2+) as cofactor.

The catalysed reaction is XTP + H2O = XMP + diphosphate + H(+). The enzyme catalyses dITP + H2O = dIMP + diphosphate + H(+). It carries out the reaction ITP + H2O = IMP + diphosphate + H(+). In terms of biological role, pyrophosphatase that catalyzes the hydrolysis of nucleoside triphosphates to their monophosphate derivatives, with a high preference for the non-canonical purine nucleotides XTP (xanthosine triphosphate), dITP (deoxyinosine triphosphate) and ITP. Seems to function as a house-cleaning enzyme that removes non-canonical purine nucleotides from the nucleotide pool, thus preventing their incorporation into DNA/RNA and avoiding chromosomal lesions. This Salmonella paratyphi A (strain ATCC 9150 / SARB42) protein is dITP/XTP pyrophosphatase (rdgB).